A 299-amino-acid polypeptide reads, in one-letter code: Regucalcin (299 aa).

Glu18 provides a ligand contact to a divalent metal cation. Residues Arg101, Asn103, and Glu121 each contribute to the substrate site. A divalent metal cation-binding residues include Asn154 and Asp204. Asp204 serves as the catalytic Proton donor/acceptor.

The protein belongs to the SMP-30/CGR1 family. The cofactor is Zn(2+). Requires Mn(2+) as cofactor. Ca(2+) serves as cofactor. Mg(2+) is required as a cofactor. Expressed in the liver, and in the pronephros from the late tadpole stage.

It is found in the cytoplasm. The enzyme catalyses D-glucono-1,5-lactone + H2O = D-gluconate + H(+). It functions in the pathway cofactor biosynthesis; L-ascorbate biosynthesis via UDP-alpha-D-glucuronate pathway; L-ascorbate from UDP-alpha-D-glucuronate: step 3/4. Functionally, gluconolactonase with low activity towards other sugar lactones, including gulonolactone and galactonolactone. Catalyzes a key step in ascorbic acid (vitamin C) biosynthesis. Can also hydrolyze diisopropyl phosphorofluoridate and phenylacetate (in vitro). Calcium-binding protein. Modulates Ca(2+) signaling, and Ca(2+)-dependent cellular processes and enzyme activities. The polypeptide is Regucalcin (Xenopus laevis (African clawed frog)).